We begin with the raw amino-acid sequence, 512 residues long: Inosine-5'-monophosphate dehydrogenase (512 aa).

2 CBS domains span residues 110–169 (FIMK…SAPV) and 173–231 (MTRR…PNSS). NAD(+) is bound by residues 268–270 (DSS) and 318–320 (GMG). K(+)-binding residues include Gly320 and Gly322. Ser323 serves as a coordination point for IMP. Cys325 provides a ligand contact to K(+). Cys325 functions as the Thioimidate intermediate in the catalytic mechanism. IMP-binding positions include 358 to 360 (DGG), 381 to 382 (GS), and 405 to 409 (YRGMG). Arg423 acts as the Proton acceptor in catalysis. Residue Gln435 participates in IMP binding. K(+)-binding residues include Glu494 and Gly495. A Microbody targeting signal motif is present at residues 510–512 (SKL).

The protein belongs to the IMPDH/GMPR family. As to quaternary structure, homotetramer. K(+) serves as cofactor.

It is found in the glycosome. The catalysed reaction is IMP + NAD(+) + H2O = XMP + NADH + H(+). It functions in the pathway purine metabolism; XMP biosynthesis via de novo pathway; XMP from IMP: step 1/1. Mycophenolic acid (MPA) is a non-competitive inhibitor that prevents formation of the closed enzyme conformation by binding to the same site as the amobile flap. In contrast, mizoribine monophosphate (MZP) is a competitive inhibitor that induces the closed conformation. MPA is a potent inhibitor of mammalian IMPDHs but a poor inhibitor of the bacterial enzymes. MZP is a more potent inhibitor of bacterial IMPDH. In terms of biological role, catalyzes the conversion of inosine 5'-phosphate (IMP) to xanthosine 5'-phosphate (XMP), the first committed and rate-limiting step in the de novo synthesis of guanine nucleotides, and therefore plays an important role in the regulation of cell growth. The sequence is that of Inosine-5'-monophosphate dehydrogenase from Trypanosoma brucei brucei.